The sequence spans 95 residues: Aspartyl/glutamyl-tRNA(Asn/Gln) amidotransferase subunit C (95 aa).

The protein belongs to the GatC family. As to quaternary structure, heterotrimer of A, B and C subunits.

The catalysed reaction is L-glutamyl-tRNA(Gln) + L-glutamine + ATP + H2O = L-glutaminyl-tRNA(Gln) + L-glutamate + ADP + phosphate + H(+). It catalyses the reaction L-aspartyl-tRNA(Asn) + L-glutamine + ATP + H2O = L-asparaginyl-tRNA(Asn) + L-glutamate + ADP + phosphate + 2 H(+). Allows the formation of correctly charged Asn-tRNA(Asn) or Gln-tRNA(Gln) through the transamidation of misacylated Asp-tRNA(Asn) or Glu-tRNA(Gln) in organisms which lack either or both of asparaginyl-tRNA or glutaminyl-tRNA synthetases. The reaction takes place in the presence of glutamine and ATP through an activated phospho-Asp-tRNA(Asn) or phospho-Glu-tRNA(Gln). This chain is Aspartyl/glutamyl-tRNA(Asn/Gln) amidotransferase subunit C, found in Cytophaga hutchinsonii (strain ATCC 33406 / DSM 1761 / CIP 103989 / NBRC 15051 / NCIMB 9469 / D465).